The sequence spans 305 residues: RNA-binding protein with serine-rich domain 1 (305 aa).

Basic residues predominate over residues 1 to 10 (MDLSGVKKKS). The tract at residues 1-161 (MDLSGVKKKS…KRRSPSPKPT (161 aa)) is necessary for interaction with SRP54, nuclear localization and exon-skipping. The disordered stretch occupies residues 1–170 (MDLSGVKKKS…TKVHIGRLTR (170 aa)). Residues 1 to 220 (MDLSGVKKKS…ENPDEAEKAL (220 aa)) are necessary for interaction with the cleaved p110 isoform of CDC2L1. Glycyl lysine isopeptide (Lys-Gly) (interchain with G-Cter in SUMO2) cross-links involve residues K7 and K15. Residues 33–59 (DRSDEKSKDRSKDKGATKESSEKDRGR) show a composition bias toward basic and acidic residues. S53 is subject to Phosphoserine; by CK2. The span at 68 to 126 (ASSGSSSTRSRSSSTSSSGSSTSTGSSSGSSSSSASSRSGSSSTSRSSSSSSSSGSPSP) shows a compositional bias: low complexity. The necessary for interactions with UPF2 and UPF3B and UPF2-dependent NMD stretch occupies residues 69–121 (SSGSSSTRSRSSSTSSSGSSTSTGSSSGSSSSSASSRSGSSSTSRSSSSSSSS). Basic residues-rich tracts occupy residues 127–143 (SRRR…KSKP) and 151–167 (RKRR…HIGR). Phosphoserine occurs at positions 155 and 157. Positions 156–242 (PSPKPTKVHI…ITATAVLAPW (87 aa)) are necessary for interaction with PNN and exon-skipping. An interaction with SAP18 and ACIN1 region spans residues 159–244 (KPTKVHIGRL…ATAVLAPWPR (86 aa)). Position 161 is a phosphothreonine (T161). The RRM domain maps to 161 to 240 (TKVHIGRLTR…QEITATAVLA (80 aa)). K218 carries the post-translational modification N6-acetyllysine. The necessary for interaction with TRA2B, nuclear localization and exon-skipping stretch occupies residues 238 to 305 (VLAPWPRPPP…RSRSSSNSSR (68 aa)). Residues 240–305 (APWPRPPPRR…RSRSSSNSSR (66 aa)) are disordered. Residues 242–262 (WPRPPPRRFSPPRRMLPPPPM) show a composition bias toward pro residues. The segment covering 266–298 (SPPRMRRRSRSPRRRSPVRRRSRSPGRRRHRSR) has biased composition (basic residues).

The protein belongs to the splicing factor SR family. Found in mRNA splicing-dependent exon junction complexes (EJC). Found in a post-splicing complex with NXF1, RBM8A, UPF1, UPF2, UPF3A, UPF3B and RNPS1. Component of the heterotrimeric ASAP (apoptosis- and splicing-associated protein) and PSAP complexes consisting of RNPS1, SAP18 and either ACIN1 or PNN, respectively; the ASAP and PSAP complexes probably are formed mutually exclusive. Component of the active spliceosome. Associates with polysomes. Interacts with the cleaved p110 isoform of CDC2L1, CSNK2A1, PNN, SART3, SRP54, SRRM1 and TRA2B/SFRS10. Post-translationally, phosphorylated on one or more of the four Ser/Thr residues (Ser-43, Thr-49, Ser-52 or Ser-53). Ser-53 phosphorylation site is important for splicing and translation stimulation activity in vitro. In terms of tissue distribution, ubiquitous.

It is found in the nucleus. The protein localises to the nucleus speckle. Its subcellular location is the cytoplasm. Functionally, part of pre- and post-splicing multiprotein mRNP complexes. Auxiliary component of the splicing-dependent multiprotein exon junction complex (EJC) deposited at splice junction on mRNAs. The EJC is a dynamic structure consisting of core proteins and several peripheral nuclear and cytoplasmic associated factors that join the complex only transiently either during EJC assembly or during subsequent mRNA metabolism. Component of the ASAP and PSAP complexes which bind RNA in a sequence-independent manner and are proposed to be recruited to the EJC prior to or during the splicing process and to regulate specific excision of introns in specific transcription subsets. The ASAP complex can inhibit RNA processing during in vitro splicing reactions. The ASAP complex promotes apoptosis and is disassembled after induction of apoptosis. Enhances the formation of the ATP-dependent A complex of the spliceosome. Involved in both constitutive splicing and, in association with SRP54 and TRA2B/SFRS10, in distinctive modulation of alternative splicing in a substrate-dependent manner. Involved in the splicing modulation of BCL2L1/Bcl-X (and probably other apoptotic genes); specifically inhibits formation of proapoptotic isoforms such as Bcl-X(S); the activity is different from the established EJC assembly and function. Participates in mRNA 3'-end cleavage. Involved in UPF2-dependent nonsense-mediated decay (NMD) of mRNAs containing premature stop codons. Also mediates increase of mRNA abundance and translational efficiency. Binds spliced mRNA 20-25 nt upstream of exon-exon junctions. This is RNA-binding protein with serine-rich domain 1 (RNPS1) from Homo sapiens (Human).